We begin with the raw amino-acid sequence, 148 residues long: Large ribosomal subunit protein uL13 (148 aa).

It belongs to the universal ribosomal protein uL13 family. Part of the 50S ribosomal subunit.

Functionally, this protein is one of the early assembly proteins of the 50S ribosomal subunit, although it is not seen to bind rRNA by itself. It is important during the early stages of 50S assembly. In Lacticaseibacillus casei (strain BL23) (Lactobacillus casei), this protein is Large ribosomal subunit protein uL13.